The following is a 242-amino-acid chain: Probable transcriptional regulatory protein HEAR0561 (242 aa).

The protein belongs to the TACO1 family.

It is found in the cytoplasm. In Herminiimonas arsenicoxydans, this protein is Probable transcriptional regulatory protein HEAR0561.